Reading from the N-terminus, the 1291-residue chain is GRB10-interacting GYF protein 2 (1291 aa).

Ala2 is subject to N-acetylalanine. Ser19, Ser26, and Ser30 each carry phosphoserine. Omega-N-methylarginine is present on residues Arg107, Arg119, and Arg121. Residues 112-132 (GTVVGAPRGRSSSRGRGRGRG) form a disordered region. Residue Ser140 is modified to Phosphoserine. Disordered stretches follow at residues 148 to 196 (FGRG…RKHE), 209 to 248 (REEQ…GWRE), and 267 to 484 (RGYR…TEPD). Arg150 carries the post-translational modification Omega-N-methylarginine. Residues 152–183 (GGREMHRSQSWEERGDRRFEKPGRKDVGRPNF) are compositionally biased toward basic and acidic residues. A phosphoserine mark is found at Ser161, Ser190, and Ser237. Residues 226–248 (SRRDGERWRPHSPDGPRSTGWRE) are compositionally biased toward basic and acidic residues. The short motif at 281–311 (DDRDSLPEWCLEDAEEEMGTFDSSGAFLSLK) is the DDX6 binding motif element. Acidic residues predominate over residues 290–299 (CLEDAEEEMG). Residues 313–364 (VQKEPIPEEQEMDFRPVEEGEERSDSDSSHNEEAKEPDKTNRREGEKTDRAG) are compositionally biased toward basic and acidic residues. The span at 371 to 393 (VPQTSLSSARPGTPSDHQPQEAT) shows a compositional bias: polar residues. Thr383 bears the Phosphothreonine mark. Residues 394–415 (QFERKDEPKAEQVEKAEEENRS) are compositionally biased toward basic and acidic residues. The GYF domain maps to 534-582 (MQKWYYKDPQGEIQGPFNNQEMAEWFQAGYFTMSLLVKRACDESFQPLG). Residues 548–564 (GPFNNQEMAEWFQAGYF) form a required for GRB10-binding region. Ser594 bears the Phosphoserine mark. Disordered stretches follow at residues 732 to 794 (KAKA…QEEA), 846 to 937 (EEAA…SNTA), 958 to 998 (ERQL…SKPA), 1011 to 1053 (EARQ…SVWG), and 1090 to 1118 (KEVG…NRQN). Basic and acidic residues predominate over residues 846 to 898 (EEAAKWAREEEEAQRRLEENRLRMEEEAARLRHEEEERKRKELELQRQKDLMR). A compositionally biased stretch (low complexity) spans 899 to 924 (QRQQQQEALRRLQQQQQQQQLAQMKL). The span at 925 to 937 (PSSSTWGQQSNTA) shows a compositional bias: polar residues. A compositionally biased stretch (basic and acidic residues) spans 958–973 (ERQLREEQRRQQRELM). Low complexity predominate over residues 977–986 (QQQQQQQQQQ). A Phosphoserine modification is found at Ser995. The segment covering 1015–1031 (MQKQQQQQQQQQQQHQQ) has biased composition (low complexity). Polar residues predominate over residues 1032–1053 (SNRARNSTHSNLHTSLGNSVWG). Over residues 1096 to 1110 (NSTNKNKNNASLSKS) the composition is skewed to low complexity. Residue Lys1129 forms a Glycyl lysine isopeptide (Lys-Gly) (interchain with G-Cter in SUMO2) linkage. Disordered stretches follow at residues 1202–1223 (AKQK…QDSV) and 1239–1263 (QSNN…KMVR). A compositionally biased stretch (low complexity) spans 1208 to 1220 (QQRQQQQQQQQQQ). A Phosphoserine modification is found at Ser1276.

It belongs to the GIGYF family. Component of the 4EHP-GYF2 complex, at least composed of EIF4E2, GIGYF2 and ZNF598. Interacts (via the 4EHP-binding motif) with EIF4E2; the interaction is direct. Interacts with ZFP36/TTP (via P-P-P-P-G repeats); the interaction is direct. Interacts with GRB10. Interacts (via DDX6 motif) with DDX6 (via RecA-like domain 2). As to expression, expressed in heart, liver, kidney and brain as well as in testis.

Functionally, key component of the 4EHP-GYF2 complex, a multiprotein complex that acts as a repressor of translation initiation. In the 4EHP-GYF2 complex, acts as a factor that bridges EIF4E2 to ZFP36/TTP, linking translation repression with mRNA decay. Also recruits and bridges the association of the 4EHP complex with the decapping effector protein DDX6, which is required for the ZFP36/TTP-mediated down-regulation of AU-rich mRNA. May act cooperatively with GRB10 to regulate tyrosine kinase receptor signaling, including IGF1 and insulin receptors. In association with EIF4E2, assists ribosome-associated quality control (RQC) by sequestering the mRNA cap, blocking ribosome initiation and decreasing the translational load on problematic messages. Part of a pathway that works in parallel to RQC-mediated degradation of the stalled nascent polypeptide. GIGYF2 and EIF4E2 work downstream and independently of ZNF598, which seems to work as a scaffold that can recruit them to faulty mRNA even if alternative recruitment mechanisms may exist. The chain is GRB10-interacting GYF protein 2 from Mus musculus (Mouse).